Consider the following 454-residue polypeptide: UDP-N-acetylmuramate--L-alanine ligase (454 aa).

Residue 112 to 118 (GTHGKTT) participates in ATP binding.

The protein belongs to the MurCDEF family.

It localises to the cytoplasm. The catalysed reaction is UDP-N-acetyl-alpha-D-muramate + L-alanine + ATP = UDP-N-acetyl-alpha-D-muramoyl-L-alanine + ADP + phosphate + H(+). It participates in cell wall biogenesis; peptidoglycan biosynthesis. Functionally, cell wall formation. The chain is UDP-N-acetylmuramate--L-alanine ligase from Oleidesulfovibrio alaskensis (strain ATCC BAA-1058 / DSM 17464 / G20) (Desulfovibrio alaskensis).